We begin with the raw amino-acid sequence, 500 residues long: Glycerol kinase (500 aa).

Thr-13 provides a ligand contact to ADP. 3 residues coordinate ATP: Thr-13, Thr-14, and Ser-15. Residue Thr-13 participates in sn-glycerol 3-phosphate binding. Arg-17 is an ADP binding site. Positions 83, 84, 135, and 245 each coordinate sn-glycerol 3-phosphate. 5 residues coordinate glycerol: Arg-83, Glu-84, Tyr-135, Asp-245, and Gln-246. ADP is bound by residues Thr-267 and Gly-310. ATP-binding residues include Thr-267, Gly-310, Gln-314, and Gly-411. The ADP site is built by Gly-411 and Asn-415.

It belongs to the FGGY kinase family. Homotetramer and homodimer (in equilibrium).

The enzyme catalyses glycerol + ATP = sn-glycerol 3-phosphate + ADP + H(+). It participates in polyol metabolism; glycerol degradation via glycerol kinase pathway; sn-glycerol 3-phosphate from glycerol: step 1/1. Activated by phosphorylation and inhibited by fructose 1,6-bisphosphate (FBP). In terms of biological role, key enzyme in the regulation of glycerol uptake and metabolism. Catalyzes the phosphorylation of glycerol to yield sn-glycerol 3-phosphate. The protein is Glycerol kinase of Carboxydothermus hydrogenoformans (strain ATCC BAA-161 / DSM 6008 / Z-2901).